Here is a 393-residue protein sequence, read N- to C-terminus: NADH-quinone oxidoreductase subunit D (393 aa).

The protein belongs to the complex I 49 kDa subunit family. NDH-1 is composed of 14 different subunits. Subunits NuoB, C, D, E, F, and G constitute the peripheral sector of the complex.

It is found in the cell inner membrane. It catalyses the reaction a quinone + NADH + 5 H(+)(in) = a quinol + NAD(+) + 4 H(+)(out). Its function is as follows. NDH-1 shuttles electrons from NADH, via FMN and iron-sulfur (Fe-S) centers, to quinones in the respiratory chain. The immediate electron acceptor for the enzyme in this species is believed to be ubiquinone. Couples the redox reaction to proton translocation (for every two electrons transferred, four hydrogen ions are translocated across the cytoplasmic membrane), and thus conserves the redox energy in a proton gradient. The polypeptide is NADH-quinone oxidoreductase subunit D (Ehrlichia ruminantium (strain Gardel)).